Reading from the N-terminus, the 247-residue chain is Acidic 27 kDa endochitinase (247 aa).

The first 16 residues, methionine 1–alanine 16, serve as a signal peptide directing secretion. Glutamate 84 functions as the Proton donor in the catalytic mechanism. A disulfide bond links cysteine 206 and cysteine 238.

This sequence belongs to the glycosyl hydrolase 19 family. Chitinase class II subfamily.

It is found in the secreted. It localises to the extracellular space. The catalysed reaction is Random endo-hydrolysis of N-acetyl-beta-D-glucosaminide (1-&gt;4)-beta-linkages in chitin and chitodextrins.. Functionally, defense against chitin-containing fungal pathogens. This is Acidic 27 kDa endochitinase (CHI17) from Solanum lycopersicum (Tomato).